A 547-amino-acid polypeptide reads, in one-letter code: DNA ligase (547 aa).

Glutamate 244 is a binding site for ATP. The active-site N6-AMP-lysine intermediate is lysine 246. The ATP site is built by arginine 251, arginine 266, glutamate 295, phenylalanine 334, arginine 405, and lysine 411.

The protein belongs to the ATP-dependent DNA ligase family. Requires Mg(2+) as cofactor.

It carries out the reaction ATP + (deoxyribonucleotide)n-3'-hydroxyl + 5'-phospho-(deoxyribonucleotide)m = (deoxyribonucleotide)n+m + AMP + diphosphate.. DNA ligase that seals nicks in double-stranded DNA during DNA replication, DNA recombination and DNA repair. In Methanospirillum hungatei JF-1 (strain ATCC 27890 / DSM 864 / NBRC 100397 / JF-1), this protein is DNA ligase.